The chain runs to 368 residues: Phosphate acyltransferase (368 aa).

Residues 335-368 form a disordered region; sequence VSLGDGEHDAGGAGHTGPAAGQHAEPPAAQSSKA.

The protein belongs to the PlsX family. As to quaternary structure, homodimer. Probably interacts with PlsY.

It localises to the cytoplasm. It carries out the reaction a fatty acyl-[ACP] + phosphate = an acyl phosphate + holo-[ACP]. The protein operates within lipid metabolism; phospholipid metabolism. In terms of biological role, catalyzes the reversible formation of acyl-phosphate (acyl-PO(4)) from acyl-[acyl-carrier-protein] (acyl-ACP). This enzyme utilizes acyl-ACP as fatty acyl donor, but not acyl-CoA. This is Phosphate acyltransferase from Burkholderia vietnamiensis (strain G4 / LMG 22486) (Burkholderia cepacia (strain R1808)).